The primary structure comprises 407 residues: Peptidase T (407 aa).

His-77 serves as a coordination point for Zn(2+). The active site involves Asp-79. Asp-138 contacts Zn(2+). The active-site Proton acceptor is the Glu-172. Residues Glu-173, Asp-195, and His-377 each coordinate Zn(2+).

The protein belongs to the peptidase M20B family. It depends on Zn(2+) as a cofactor.

It is found in the cytoplasm. The catalysed reaction is Release of the N-terminal residue from a tripeptide.. Functionally, cleaves the N-terminal amino acid of tripeptides. In Aeromonas hydrophila subsp. hydrophila (strain ATCC 7966 / DSM 30187 / BCRC 13018 / CCUG 14551 / JCM 1027 / KCTC 2358 / NCIMB 9240 / NCTC 8049), this protein is Peptidase T.